A 502-amino-acid polypeptide reads, in one-letter code: Probable cytosol aminopeptidase (502 aa).

Residues Lys254 and Asp259 each contribute to the Mn(2+) site. Lys266 is an active-site residue. Residues Asp277, Asp336, and Glu338 each contribute to the Mn(2+) site. Arg340 is a catalytic residue.

This sequence belongs to the peptidase M17 family. Requires Mn(2+) as cofactor.

Its subcellular location is the cytoplasm. It catalyses the reaction Release of an N-terminal amino acid, Xaa-|-Yaa-, in which Xaa is preferably Leu, but may be other amino acids including Pro although not Arg or Lys, and Yaa may be Pro. Amino acid amides and methyl esters are also readily hydrolyzed, but rates on arylamides are exceedingly low.. The enzyme catalyses Release of an N-terminal amino acid, preferentially leucine, but not glutamic or aspartic acids.. Presumably involved in the processing and regular turnover of intracellular proteins. Catalyzes the removal of unsubstituted N-terminal amino acids from various peptides. The sequence is that of Probable cytosol aminopeptidase from Tropheryma whipplei (strain TW08/27) (Whipple's bacillus).